A 299-amino-acid polypeptide reads, in one-letter code: Hydroxymethylglutaryl-CoA lyase YngG (299 aa).

In terms of domain architecture, Pyruvate carboxyltransferase spans 7–274 (VTIKEVGPRD…KTNVKLEKLL (268 aa)). Arginine 15 contributes to the substrate binding site. Residues aspartate 16, histidine 207, and histidine 209 each contribute to the a divalent metal cation site. Cysteine 240 is an active-site residue. Asparagine 249 contacts a divalent metal cation.

Belongs to the HMG-CoA lyase family. As to quaternary structure, homodimer and homotetramer.

It catalyses the reaction (3S)-3-hydroxy-3-methylglutaryl-CoA = acetoacetate + acetyl-CoA. The protein operates within metabolic intermediate metabolism; (S)-3-hydroxy-3-methylglutaryl-CoA degradation; acetoacetate from (S)-3-hydroxy-3-methylglutaryl-CoA: step 1/1. In terms of biological role, involved in the catabolism of branched amino acids such as leucine. The sequence is that of Hydroxymethylglutaryl-CoA lyase YngG (yngG) from Bacillus subtilis (strain 168).